Here is a 353-residue protein sequence, read N- to C-terminus: N-formyl peptide receptor 3 (353 aa).

The Extracellular portion of the chain corresponds to 1-27 (METNFSIPLNETEEVLPEPAGHTVLWI). Residues asparagine 4 and asparagine 10 are each glycosylated (N-linked (GlcNAc...) asparagine). The helical transmembrane segment at 28–50 (FSLLVHGVTFVFGVLGNGLVIWV) threads the bilayer. Topologically, residues 51–61 (AGFRMTRTVNT) are cytoplasmic. Residues 62 to 83 (ICYLNLALADFSFSAILPFRMV) traverse the membrane as a helical segment. Residues 84-100 (SVAMREKWPFGSFLCKL) lie on the Extracellular side of the membrane. A disulfide bond links cysteine 98 and cysteine 176. A helical transmembrane segment spans residues 101 to 121 (VHVMIDINLFVSVYLITIIAL). Residues 122–140 (DRCICVLHPAWAQNHRTMS) lie on the Cytoplasmic side of the membrane. A helical transmembrane segment spans residues 141–162 (LAKRVMTGLWIFTIVLTLPNFI). Residues 163–205 (FWTTISTTNGDTYCIFNFAFWGDTAVERLNVFITMAKVFLILH) are Extracellular-facing. The chain crosses the membrane as a helical span at residues 206 to 226 (FIIGFSVPMSIITVCYGIIAA). Over 227–242 (KIHRNHMIKSSRPLRV) the chain is Cytoplasmic. The helical transmembrane segment at 243–266 (FAAVVASFFICWFPYELIGILMAV) threads the bilayer. Topologically, residues 267-286 (WLKEMLLNGKYKIILVLINP) are extracellular. Residues 287 to 306 (TSSLAFFNSCLNPILYVFMG) form a helical membrane-spanning segment. The Cytoplasmic segment spans residues 307–353 (RNFQERLIRSLPTSLERALTEVPDSAQTSNTDTTSASPPEETELQAM). The tract at residues 327–353 (EVPDSAQTSNTDTTSASPPEETELQAM) is disordered. The span at 331-343 (SAQTSNTDTTSAS) shows a compositional bias: polar residues.

The protein belongs to the G-protein coupled receptor 1 family. As to expression, detected in various tissues with highest expression in lung.

Its subcellular location is the cell membrane. Low affinity receptor for N-formyl-methionyl peptides, which are powerful neutrophils chemotactic factors. Binding of FMLP to the receptor causes activation of neutrophils. This response is mediated via a G-protein that activates a phosphatidylinositol-calcium second messenger system. Acts as a receptor for humanin. The protein is N-formyl peptide receptor 3 (FPR3) of Homo sapiens (Human).